Reading from the N-terminus, the 190-residue chain is dCTP deaminase (190 aa).

A dCTP-binding site is contributed by 113-118 (KSTYAR). Glu139 (proton donor/acceptor) is an active-site residue. DCTP contacts are provided by Gln158, Tyr172, Lys181, and Gln182.

This sequence belongs to the dCTP deaminase family. Homotrimer.

The catalysed reaction is dCTP + H2O + H(+) = dUTP + NH4(+). It functions in the pathway pyrimidine metabolism; dUMP biosynthesis; dUMP from dCTP (dUTP route): step 1/2. Its function is as follows. Catalyzes the deamination of dCTP to dUTP. In Chlamydia trachomatis serovar L2 (strain ATCC VR-902B / DSM 19102 / 434/Bu), this protein is dCTP deaminase.